The following is a 236-amino-acid chain: uncharacterized protein (236 aa).

Belongs to the HyuE racemase family.

Its subcellular location is the cytoplasm. This is an uncharacterized protein from Schizosaccharomyces pombe (strain 972 / ATCC 24843) (Fission yeast).